The sequence spans 103 residues: Co-chaperonin GroES (103 aa).

Belongs to the GroES chaperonin family. As to quaternary structure, heptamer of 7 subunits arranged in a ring. Interacts with the chaperonin GroEL.

The protein resides in the cytoplasm. Together with the chaperonin GroEL, plays an essential role in assisting protein folding. The GroEL-GroES system forms a nano-cage that allows encapsulation of the non-native substrate proteins and provides a physical environment optimized to promote and accelerate protein folding. GroES binds to the apical surface of the GroEL ring, thereby capping the opening of the GroEL channel. This chain is Co-chaperonin GroES, found in Nostoc sp. (strain PCC 7120 / SAG 25.82 / UTEX 2576).